A 326-amino-acid polypeptide reads, in one-letter code: Aspartate carbamoyltransferase catalytic subunit (326 aa).

Carbamoyl phosphate contacts are provided by Arg60 and Thr61. L-aspartate is bound at residue Lys88. Carbamoyl phosphate-binding residues include Arg110, His143, and Gln146. Arg183 and Arg239 together coordinate L-aspartate. The carbamoyl phosphate site is built by Gly280 and Pro281.

Belongs to the aspartate/ornithine carbamoyltransferase superfamily. ATCase family. As to quaternary structure, heterododecamer (2C3:3R2) of six catalytic PyrB chains organized as two trimers (C3), and six regulatory PyrI chains organized as three dimers (R2).

It carries out the reaction carbamoyl phosphate + L-aspartate = N-carbamoyl-L-aspartate + phosphate + H(+). It functions in the pathway pyrimidine metabolism; UMP biosynthesis via de novo pathway; (S)-dihydroorotate from bicarbonate: step 2/3. Functionally, catalyzes the condensation of carbamoyl phosphate and aspartate to form carbamoyl aspartate and inorganic phosphate, the committed step in the de novo pyrimidine nucleotide biosynthesis pathway. This is Aspartate carbamoyltransferase catalytic subunit from Microcystis aeruginosa (strain NIES-843 / IAM M-2473).